We begin with the raw amino-acid sequence, 231 residues long: Large ribosomal subunit protein uL1 (231 aa).

The protein belongs to the universal ribosomal protein uL1 family. As to quaternary structure, part of the 50S ribosomal subunit.

In terms of biological role, binds directly to 23S rRNA. The L1 stalk is quite mobile in the ribosome, and is involved in E site tRNA release. Its function is as follows. Protein L1 is also a translational repressor protein, it controls the translation of the L11 operon by binding to its mRNA. This is Large ribosomal subunit protein uL1 from Nitrosococcus oceani (strain ATCC 19707 / BCRC 17464 / JCM 30415 / NCIMB 11848 / C-107).